The primary structure comprises 116 residues: Flagellar transcriptional regulator FlhD (116 aa).

The protein belongs to the FlhD family. As to quaternary structure, homodimer; disulfide-linked. Forms a heterohexamer composed of two FlhC and four FlhD subunits. Each FlhC binds a FlhD dimer, forming a heterotrimer, and a hexamer assembles by dimerization of two heterotrimers.

It is found in the cytoplasm. In terms of biological role, functions in complex with FlhC as a master transcriptional regulator that regulates transcription of several flagellar and non-flagellar operons by binding to their promoter region. Activates expression of class 2 flagellar genes, including fliA, which is a flagellum-specific sigma factor that turns on the class 3 genes. Also regulates genes whose products function in a variety of physiological pathways. The polypeptide is Flagellar transcriptional regulator FlhD (Xenorhabdus nematophila (Achromobacter nematophilus)).